A 432-amino-acid chain; its full sequence is Adenosine 3'-phospho 5'-phosphosulfate transporter 1 (432 aa).

A run of 9 helical transmembrane segments spans residues 5–25 (WWAVVVLAAFPSLGAGGETPE), 40–60 (VVNAAGYASFMVPGYLLVQYF), 109–129 (ALKLLFCATGLQVSYLTWGVL), 154–174 (FLVLMNRVLALIVAGLSCVLC), 238–258 (WEYLTATLISIGVSMFLLSSG), 265–285 (PATTLSGLILLAGYIAFDSFT), 299–319 (SVQMMFGVNFFSCLFTVGSLL), 353–373 (LFIFYTIGQFGAAVFTIIMTL), and 387–407 (GHTVTVVGGLGVAVVFAALLL). Serine 427 is subject to Phosphoserine.

This sequence belongs to the nucleotide-sugar transporter family. SLC35B subfamily. Highly expressed in the placenta, pancreas, mammary gland and skeletal muscle. Weakly or not expressed in colon, heart and prostate. Expressed in the brain, predominantly in frontal lobe gray matter, subcortical frontal white matter and cerebellum.

The protein localises to the golgi apparatus membrane. It catalyses the reaction 3'-phosphoadenylyl sulfate(in) + adenosine 3',5'-bisphosphate(out) = 3'-phosphoadenylyl sulfate(out) + adenosine 3',5'-bisphosphate(in). In terms of biological role, probably functions as a 3'-phosphoadenylyl sulfate:adenosine 3',5'-bisphosphate antiporter at the Golgi membranes. Mediates the transport from the cytosol into the lumen of the Golgi of 3'-phosphoadenylyl sulfate/adenosine 3'-phospho 5'-phosphosulfate (PAPS), a universal sulfuryl donor for sulfation events that take place in that compartment. In Homo sapiens (Human), this protein is Adenosine 3'-phospho 5'-phosphosulfate transporter 1.